The sequence spans 1072 residues: DNA-directed RNA polymerase subunit beta (1072 aa).

The protein belongs to the RNA polymerase beta chain family. In plastids the minimal PEP RNA polymerase catalytic core is composed of four subunits: alpha, beta, beta', and beta''. When a (nuclear-encoded) sigma factor is associated with the core the holoenzyme is formed, which can initiate transcription.

It is found in the plastid. It localises to the chloroplast. It carries out the reaction RNA(n) + a ribonucleoside 5'-triphosphate = RNA(n+1) + diphosphate. DNA-dependent RNA polymerase catalyzes the transcription of DNA into RNA using the four ribonucleoside triphosphates as substrates. In Arabidopsis thaliana (Mouse-ear cress), this protein is DNA-directed RNA polymerase subunit beta.